The chain runs to 497 residues: Probable cytosol aminopeptidase (497 aa).

Mn(2+)-binding residues include Lys263 and Asp268. The active site involves Lys275. 3 residues coordinate Mn(2+): Asp286, Asp345, and Glu347. Arg349 is an active-site residue.

Belongs to the peptidase M17 family. Requires Mn(2+) as cofactor.

Its subcellular location is the cytoplasm. The enzyme catalyses Release of an N-terminal amino acid, Xaa-|-Yaa-, in which Xaa is preferably Leu, but may be other amino acids including Pro although not Arg or Lys, and Yaa may be Pro. Amino acid amides and methyl esters are also readily hydrolyzed, but rates on arylamides are exceedingly low.. It catalyses the reaction Release of an N-terminal amino acid, preferentially leucine, but not glutamic or aspartic acids.. Presumably involved in the processing and regular turnover of intracellular proteins. Catalyzes the removal of unsubstituted N-terminal amino acids from various peptides. The protein is Probable cytosol aminopeptidase of Methylorubrum populi (strain ATCC BAA-705 / NCIMB 13946 / BJ001) (Methylobacterium populi).